We begin with the raw amino-acid sequence, 37 residues long: Cytochrome b6-f complex subunit 5 (37 aa).

Residues 5-25 (LLSGIVLGLVPITLAGLFVTA) traverse the membrane as a helical segment.

It belongs to the PetG family. As to quaternary structure, the 4 large subunits of the cytochrome b6-f complex are cytochrome b6, subunit IV (17 kDa polypeptide, PetD), cytochrome f and the Rieske protein, while the 4 small subunits are PetG, PetL, PetM and PetN. The complex functions as a dimer.

Its subcellular location is the plastid. The protein resides in the chloroplast thylakoid membrane. Its function is as follows. Component of the cytochrome b6-f complex, which mediates electron transfer between photosystem II (PSII) and photosystem I (PSI), cyclic electron flow around PSI, and state transitions. PetG is required for either the stability or assembly of the cytochrome b6-f complex. The protein is Cytochrome b6-f complex subunit 5 of Gnetum parvifolium (Small-leaved jointfir).